A 228-amino-acid chain; its full sequence is Ornithine decarboxylase antizyme 1 (228 aa).

The tract at residues arginine 17 to histidine 55 is disordered. The segment covering leucine 36–histidine 55 has biased composition (low complexity).

The protein belongs to the ODC antizyme family. In terms of assembly, interacts with ODC1 and thereby sterically blocks ODC homodimerization. Forms a ternary complex with PSMB4 and OAZ1 before PSMB4 is incorporated into the 20S proteasome. Interacts with AZIN2; this interaction disrupts the interaction between the antizyme and ODC1. Interacts with FAM171A1.

Its function is as follows. Ornithine decarboxylase (ODC) antizyme protein that negatively regulates ODC activity and intracellular polyamine biosynthesis and uptake in response to increased intracellular polyamine levels. Binds to ODC monomers, inhibiting the assembly of the functional ODC homodimer, and targets the monomers for ubiquitin-independent proteolytic destruction by the 26S proteasome. Triggers ODC degradation by inducing the exposure of a cryptic proteasome-interacting surface of ODC. Stabilizes AZIN2 by interfering with its ubiquitination. Also inhibits cellular uptake of polyamines by inactivating the polyamine uptake transporter. SMAD1/OAZ1/PSMB4 complex mediates the degradation of the CREBBP/EP300 repressor SNIP1. Involved in the translocation of AZIN2 from ER-Golgi intermediate compartment (ERGIC) to the cytosol. The sequence is that of Ornithine decarboxylase antizyme 1 (OAZ1) from Homo sapiens (Human).